The following is a 456-amino-acid chain: Exodeoxyribonuclease 7 large subunit (456 aa).

The tract at residues 1 to 103 is binds ssDNA, also required to bind the small subunit; sequence MLPSQSPAIF…DYQIIVESMQ (103 aa).

The protein belongs to the XseA family. Heterooligomer composed of two different subunits with an approximate ratio of 4:1 for small to large subunit. Also estimated to have a 6:1 ration for small to large subunits. Does not require a metal cofactor. serves as cofactor.

The protein resides in the cytoplasm. The catalysed reaction is Exonucleolytic cleavage in either 5'- to 3'- or 3'- to 5'-direction to yield nucleoside 5'-phosphates.. Its function is as follows. Bidirectionally degrades single-stranded DNA into large acid-insoluble oligonucleotides, which are then degraded further into small acid-soluble oligonucleotides. It can degrade 3' or 5' ss regions extending from the termini of duplex DNA molecules and displaced ss regions. It can also excise thymine dimers in vitro. ssDNA-binding requires both subunits. Required for production of the mature 5'-end of retron Ec78 or Ec83 msDNA. Overproduction of this subunit in the absence of an equivalent quantity of the small subunit is toxic, causing cell elongation and chromosome fragmentation or loss; its toxicity is mostly suppressed by RecA. In Escherichia coli (strain K12), this protein is Exodeoxyribonuclease 7 large subunit.